A 376-amino-acid polypeptide reads, in one-letter code: MSKIKVLIVDDSALVRQMLQEMLKSDPEIEVVGTASDPYDAREKVKQLHPDVLTLDVEMPRMDGVTFLKNLMRLHPLPVVMISTLTEKGADITFEALDLGAVDFVAKPKIDLQHTFEDYTDEICRKVKTASKVSKWQLERQYARYVANKESKPKVLSKPGSLVSKVVEKFTTDAIVPKKAPSDFSKPSHKVIALGASTGGTEAIKEVLMRLPSTTPAIVITQHIPASFSLPFAQRMNSVSEMEVTQAEDRQPILAGHVYIAPGDKHLLVERTSSGYICRLNDGPPVNRHKPSVDVMFRTVVQSVGKNAVGVLLTGMGADGAKGMKELQEIGVPTIVQDEKTCVVWGMPGEAVKLGAADYVLPLGSIPEKILALIKK.

The region spanning 5–122 (KVLIVDDSAL…QHTFEDYTDE (118 aa)) is the Response regulatory domain. A 4-aspartylphosphate modification is found at aspartate 56. Residues 185–376 (SKPSHKVIAL…PEKILALIKK (192 aa)) form the CheB-type methylesterase domain. Residues serine 197, histidine 223, and aspartate 319 contribute to the active site.

This sequence belongs to the CheB family. In terms of processing, phosphorylated by CheA. Phosphorylation of the N-terminal regulatory domain activates the methylesterase activity.

It is found in the cytoplasm. The enzyme catalyses [protein]-L-glutamate 5-O-methyl ester + H2O = L-glutamyl-[protein] + methanol + H(+). The catalysed reaction is L-glutaminyl-[protein] + H2O = L-glutamyl-[protein] + NH4(+). Its function is as follows. Involved in chemotaxis. Part of a chemotaxis signal transduction system that modulates chemotaxis in response to various stimuli. Catalyzes the demethylation of specific methylglutamate residues introduced into the chemoreceptors (methyl-accepting chemotaxis proteins or MCP) by CheR. Also mediates the irreversible deamidation of specific glutamine residues to glutamic acid. This is Protein-glutamate methylesterase/protein-glutamine glutaminase from Hydrogenovibrio crunogenus (strain DSM 25203 / XCL-2) (Thiomicrospira crunogena).